The sequence spans 218 residues: Non-structural protein NS3 (218 aa).

Belongs to the orbivirus NS3 family.

Its function is as follows. May play a role in the release of virions from infected cells. In Camelus dromedarius (Dromedary), this protein is Non-structural protein NS3 (Segment-10).